The chain runs to 364 residues: Fructose-1,6-bisphosphatase class 1 3 (364 aa).

Mg(2+) contacts are provided by glutamate 101, aspartate 123, leucine 125, and aspartate 126. Substrate is bound by residues 126–129 (DGSS) and asparagine 218. Glutamate 290 is a binding site for Mg(2+).

This sequence belongs to the FBPase class 1 family. Homotetramer. The cofactor is Mg(2+).

Its subcellular location is the cytoplasm. The catalysed reaction is beta-D-fructose 1,6-bisphosphate + H2O = beta-D-fructose 6-phosphate + phosphate. It functions in the pathway carbohydrate biosynthesis; gluconeogenesis. The polypeptide is Fructose-1,6-bisphosphatase class 1 3 (Cupriavidus necator (strain ATCC 17699 / DSM 428 / KCTC 22496 / NCIMB 10442 / H16 / Stanier 337) (Ralstonia eutropha)).